The sequence spans 162 residues: UPF0114 protein Pput_0713 (162 aa).

Transmembrane regions (helical) follow at residues 15–35 (LLAP…LKFF), 53–73 (LILV…LVMV), 109–126 (VAAS…RVFM), and 136–156 (LMWY…MGYL).

This sequence belongs to the UPF0114 family.

The protein resides in the cell membrane. This chain is UPF0114 protein Pput_0713, found in Pseudomonas putida (strain ATCC 700007 / DSM 6899 / JCM 31910 / BCRC 17059 / LMG 24140 / F1).